The chain runs to 205 residues: GTP cyclohydrolase-2 (205 aa).

Residue 49 to 53 coordinates GTP; that stretch reads RLHSE. Residues cysteine 54, cysteine 65, and cysteine 67 each contribute to the Zn(2+) site. GTP contacts are provided by residues glutamine 70, 92–94, and threonine 114; that span reads EGR. Aspartate 126 (proton acceptor) is an active-site residue. The active-site Nucleophile is the arginine 128. 2 residues coordinate GTP: threonine 149 and lysine 154.

The protein belongs to the GTP cyclohydrolase II family. It depends on Zn(2+) as a cofactor.

The enzyme catalyses GTP + 4 H2O = 2,5-diamino-6-hydroxy-4-(5-phosphoribosylamino)-pyrimidine + formate + 2 phosphate + 3 H(+). The protein operates within cofactor biosynthesis; riboflavin biosynthesis; 5-amino-6-(D-ribitylamino)uracil from GTP: step 1/4. Catalyzes the conversion of GTP to 2,5-diamino-6-ribosylamino-4(3H)-pyrimidinone 5'-phosphate (DARP), formate and pyrophosphate. This is GTP cyclohydrolase-2 from Pseudomonas entomophila (strain L48).